Here is a 139-residue protein sequence, read N- to C-terminus: Large ribosomal subunit protein uL16 (139 aa).

This sequence belongs to the universal ribosomal protein uL16 family. Part of the 50S ribosomal subunit.

Binds 23S rRNA and is also seen to make contacts with the A and possibly P site tRNAs. The chain is Large ribosomal subunit protein uL16 from Microcystis aeruginosa (strain NIES-843 / IAM M-2473).